The sequence spans 636 residues: Probable potassium transport system protein Kup (636 aa).

A run of 12 helical transmembrane segments spans residues 23-43, 57-77, 111-131, 148-168, 179-199, 217-237, 258-278, 287-307, 348-368, 377-397, 409-429, and 431-451; these read MALMLGALGVVYGDIGTSPLY, PAHVLGVLSILFWLLMIVVSL, WLLIVLGIFGAALFYGDSMIT, HTLEPWVVPVALVVLVALFAI, LFGPIMALWFATLAVLGGYQI, FIAEFPVMSFLLLGAVVLALT, WFAMVLPALTLCYFGQGALLL, PFFLMAPEWGLAALVGLATVA, IYLPQVNALLLCAVLVLVLLF, AYGFAVTGTMLTTSVLAFAVL, WMVLLGALLVIDILLFGANIF, and IHEGGWLPLLVGVVVFTLMMT.

Belongs to the HAK/KUP transporter (TC 2.A.72) family.

It localises to the cell inner membrane. It carries out the reaction K(+)(in) + H(+)(in) = K(+)(out) + H(+)(out). Its function is as follows. Transport of potassium into the cell. Likely operates as a K(+):H(+) symporter. This Bordetella bronchiseptica (strain ATCC BAA-588 / NCTC 13252 / RB50) (Alcaligenes bronchisepticus) protein is Probable potassium transport system protein Kup.